The sequence spans 622 residues: WD repeat-containing protein 70 (622 aa).

The segment covering 37–55 (TAVERSKKTLEAREKEEQI) has biased composition (basic and acidic residues). Residues 37–141 (TAVERSKKTL…DNPVKGIPDS (105 aa)) form a disordered region. The segment covering 67–84 (SSSRQKNTDTSSSSSGSE) has biased composition (low complexity). Over residues 120–132 (SDDEDEEQHEDDD) the composition is skewed to acidic residues. WD repeat units lie at residues 148-187 (HGTK…ASLQ), 195-236 (CECH…ECVK), 249-289 (GHTA…KHKG), 298-337 (GKRV…HTKF), 344-383 (TPGT…NPLN), 389-434 (ANYF…KVYE), and 437-476 (VTEA…QRGA). Basic and acidic residues predominate over residues 508–533 (REPRQRSTRKQLEKDRLDPVKSHKPE). Disordered regions lie at residues 508–549 (REPR…GTHG) and 602–622 (AEVE…KRKI). Gly residues predominate over residues 539–549 (PGRGGRVGTHG). The span at 604 to 614 (VESDEEETDNE) shows a compositional bias: acidic residues.

Belongs to the WD repeat GAD-1 family.

The sequence is that of WD repeat-containing protein 70 (wdr70) from Xenopus tropicalis (Western clawed frog).